We begin with the raw amino-acid sequence, 337 residues long: MDPRSEVILRQHDYLKGRVLLINAPNDALVSQLPTEIDASVWTWNYADYQGFLNAGATAHFSVEFPLQEFDQAIIFVPKSKELLNYILHVVMSHLKIDQSVFLVGEKKGGVERAAKQLQSFGKILKLDSARHCQLWHLKIEKTEKIKPLESWLKTYTVQVNEQELTICALPGVFSQTHLDVGTAVLLPYLNQVKSGRIADFGCGAGIISCYLAKANSSNIIHALDIDAFALQSTEMTFSRNGIGSDQLRLQPVTGIADAPTELDAIVSNPPFHQGIHTNYDASEGLCQNAKKHLKASGELWIVANRFLNYPILIEKHFGQCEIKTDLQGFKVLYACA.

It belongs to the methyltransferase superfamily. RsmC family. As to quaternary structure, monomer.

The protein localises to the cytoplasm. It catalyses the reaction guanosine(1207) in 16S rRNA + S-adenosyl-L-methionine = N(2)-methylguanosine(1207) in 16S rRNA + S-adenosyl-L-homocysteine + H(+). Its function is as follows. Specifically methylates the guanine in position 1207 of 16S rRNA in the 30S particle. In Acinetobacter baumannii (strain ACICU), this protein is Ribosomal RNA small subunit methyltransferase C.